The sequence spans 281 residues: Stomatin-4 (281 aa).

A helical transmembrane segment spans residues 28 to 48 (WIITIISYLVVLFTLPLSAFF).

The protein belongs to the band 7/mec-2 family.

Its subcellular location is the membrane. This Caenorhabditis elegans protein is Stomatin-4 (sto-4).